Here is a 134-residue protein sequence, read N- to C-terminus: UPF0756 membrane protein YeaL (134 aa).

The next 4 membrane-spanning stretches (helical) occupy residues 14–34 (ALGF…LIIV), 51–71 (LTVG…SGTL), 86–106 (LVAI…ITLM), and 110–130 (PQLV…FRGV).

Belongs to the UPF0756 family.

It localises to the cell membrane. The polypeptide is UPF0756 membrane protein YeaL (Salmonella typhimurium (strain LT2 / SGSC1412 / ATCC 700720)).